A 356-amino-acid polypeptide reads, in one-letter code: D-alanine--D-alanine ligase (356 aa).

In terms of domain architecture, ATP-grasp spans 134–339 (KQLFEHRGLP…YPELITKLIE (206 aa)). 167 to 222 (NDKLNYPVFVKPANLGSSVGISKCNNEAELKEGIKEAFQFDRKLVIEQGVNAREIE) provides a ligand contact to ATP. Residues aspartate 293, glutamate 306, and asparagine 308 each coordinate Mg(2+).

The protein belongs to the D-alanine--D-alanine ligase family. The cofactor is Mg(2+). Mn(2+) serves as cofactor.

Its subcellular location is the cytoplasm. The catalysed reaction is 2 D-alanine + ATP = D-alanyl-D-alanine + ADP + phosphate + H(+). It participates in cell wall biogenesis; peptidoglycan biosynthesis. Functionally, cell wall formation. The sequence is that of D-alanine--D-alanine ligase from Staphylococcus aureus (strain Mu3 / ATCC 700698).